We begin with the raw amino-acid sequence, 195 residues long: ATP synthase subunit b (195 aa).

The helical transmembrane segment at 28–48 threads the bilayer; sequence IFPNVYVLIAHVISLIFLLLL.

This sequence belongs to the ATPase B chain family. F-type ATPases have 2 components, F(1) - the catalytic core - and F(0) - the membrane proton channel. F(1) has five subunits: alpha(3), beta(3), gamma(1), delta(1), epsilon(1). F(0) has three main subunits: a(1), b(2) and c(10-14). The alpha and beta chains form an alternating ring which encloses part of the gamma chain. F(1) is attached to F(0) by a central stalk formed by the gamma and epsilon chains, while a peripheral stalk is formed by the delta and b chains.

It is found in the cell membrane. In terms of biological role, f(1)F(0) ATP synthase produces ATP from ADP in the presence of a proton or sodium gradient. F-type ATPases consist of two structural domains, F(1) containing the extramembraneous catalytic core and F(0) containing the membrane proton channel, linked together by a central stalk and a peripheral stalk. During catalysis, ATP synthesis in the catalytic domain of F(1) is coupled via a rotary mechanism of the central stalk subunits to proton translocation. Functionally, component of the F(0) channel, it forms part of the peripheral stalk, linking F(1) to F(0). The protein is ATP synthase subunit b of Malacoplasma penetrans (strain HF-2) (Mycoplasma penetrans).